Reading from the N-terminus, the 130-residue chain is Ribosome-binding factor A (130 aa).

Residues 111 to 130 are disordered; that stretch reads RDLDDVGPEATSSDEDAEQR.

Belongs to the RbfA family. As to quaternary structure, monomer. Binds 30S ribosomal subunits, but not 50S ribosomal subunits or 70S ribosomes.

It localises to the cytoplasm. Its function is as follows. One of several proteins that assist in the late maturation steps of the functional core of the 30S ribosomal subunit. Associates with free 30S ribosomal subunits (but not with 30S subunits that are part of 70S ribosomes or polysomes). Required for efficient processing of 16S rRNA. May interact with the 5'-terminal helix region of 16S rRNA. The sequence is that of Ribosome-binding factor A from Xanthomonas euvesicatoria pv. vesicatoria (strain 85-10) (Xanthomonas campestris pv. vesicatoria).